Reading from the N-terminus, the 725-residue chain is Nitrogen regulatory protein areA (725 aa).

3 disordered regions span residues 1–90 (MRLS…RTNS), 429–464 (NQGGTLGRAHGSAASVSEVRNQNQDPRRYGKVPRTA), and 479–524 (GSAS…PEPA). A compositionally biased stretch (basic and acidic residues) spans 39–48 (PAEHSAHPSV). Polar residues-rich tracts occupy residues 442-452 (ASVSEVRNQNQ) and 479-500 (GSASGLPTNHPSPSTLPESGLS). The GATA-type zinc finger occupies 525–549 (CTNCFTQTTPLWRRNPEGQPLCNAC). The disordered stretch occupies residues 574-714 (RSSANTLTVG…NHSIAGGQGA (141 aa)). Polar residues-rich tracts occupy residues 575-584 (SSANTLTVGT) and 597-624 (IQHAPSTSISSRMNTSESPPSINGSSTL). Composition is skewed to low complexity over residues 631 to 656 (PIAAAPPKSGPPAGVAQARAGVQVAP) and 678 to 704 (KSAAPPSRSKVVPLAPAMAPPAAANPA).

It is found in the nucleus. In terms of biological role, major nitrogen regulatory protein. The sequence is that of Nitrogen regulatory protein areA (AREA) from Penicillium chrysogenum (Penicillium notatum).